The primary structure comprises 818 residues: Protein TOC75-3, chloroplastic (818 aa).

A chloroplast-targeting transit peptide spans 1 to 79; it reads MAAFSVNGQL…LKNLAKPLAV (79 aa). The segment covering 15–41 has biased composition (low complexity); the sequence is TSSTASTSLSSRRKFLSPSSSRLPRIS. The disordered stretch occupies residues 15-67; the sequence is TSSTASTSLSSRRKFLSPSSSRLPRISTQSPRVPSIKCSKSLPNRDTETSSKD. Residues 57 to 67 show a composition bias toward basic and acidic residues; it reads PNRDTETSSKD. Residues 80-140 constitute a chloroplast; outer membrane transit peptide; it reads ASVSSAASFF…KLFSPSPAVA (61 aa). POTRA domains are found at residues 141–246, 247–364, and 365–448; these read DEEQ…FAES, TWQS…VVEG, and DITQ…LKEL. Residues 141 to 473 are Chloroplast intermembrane-facing; sequence DEEQSPDWDS…GRGGAPTLAS (333 aa). Residues 474–482 form a beta stranded membrane-spanning segment; sequence FQPGGSVTF. Over 483-509 the chain is Cytoplasmic; it reads EHRNLQGLNRSLMGSVTTSNFLNPQDD. A beta stranded transmembrane segment spans residues 510–518; sequence LSFKLEYVH. At 519-562 the chain is on the chloroplast intermembrane side; it reads PYLDGVYNPRNRTFKTSCFNSRKLSPVFTGGPGVEEVPPIWVDR. Residues 563-570 traverse the membrane as a beta stranded segment; sequence AGVKANIT. Residues 571-578 are Cytoplasmic-facing; it reads ENFTRQSK. The chain crosses the membrane as a beta stranded span at residues 579 to 586; that stretch reads FTYGLVME. Residues 587–693 lie on the Chloroplast intermembrane side of the membrane; it reads EITTRDESSH…VEQGAGKSPP (107 aa). The chain crosses the membrane as a beta stranded span at residues 694–702; it reads PVLVLHGHY. At 703-714 the chain is on the cytoplasmic side; it reads GGCVGDLPSYDA. A beta stranded transmembrane segment spans residues 715 to 723; the sequence is FVLGGPYSV. Residues 724–785 lie on the Chloroplast intermembrane side of the membrane; that stretch reads RGYNMGELGA…VYRRTGQGSS (62 aa). A beta stranded membrane pass occupies residues 786 to 792; it reads YGAGVKL. Over 793 to 806 the chain is Cytoplasmic; it reads GLVRAEYAVDHNNG. Residues 807–814 form a beta stranded membrane-spanning segment; that stretch reads TGALFFRF. Residues 815–818 are Chloroplast intermembrane-facing; that stretch reads GERY.

It belongs to the TOC75 family. Part of the TOC core complex that includes a protein for the specific recognition of transit peptides surrounded by a ring composed of four proteins forming translocation channels, and four to five GTP-binding proteins providing energy. This core complex can interact with components of the TIC complex to form a larger import complex. Chloroplastic protein precursors such as prSS (precursor of the RuBisCO small subunit) also interact with these complexes. The TOC complex contains a specific subset of polar lipids such as digalactosyldiacylglyceride (DGDG), phosphatidylcholine (PC) and phosphatidylglycerol (PG). TOC75-3 interacts with TOC34/OEP34, TOC159/TOC86, TOC132 and TOC120. Interacts with SP1. Interacts with TIC236. In terms of tissue distribution, mostly expressed in young and actively dividing photosynthetic tissues and, to a lower extent, in old leaves and roots. Particularly low levels in leaves after etiolation.

It localises to the plastid. The protein localises to the chloroplast outer membrane. Its function is as follows. Essential protein. Mediates the insertion of proteins targeted to the outer membrane of chloroplasts. Required for the import of protein precursors into chloroplasts. Forms the voltage-dependent preprotein translocation channels (hydrophilic beta barrel) of the TOC complex in the chloroplastic outer membrane. This Arabidopsis thaliana (Mouse-ear cress) protein is Protein TOC75-3, chloroplastic.